The chain runs to 478 residues: Bifunctional protein HldE (478 aa).

The segment at 1-318 (MKITLPDFTR…ENAIHARPES (318 aa)) is ribokinase. Residue 195–198 (NLSE) participates in ATP binding. Asp-264 is a catalytic residue. Positions 344–478 (MTNGVFDILH…KTIISGSGKN (135 aa)) are cytidylyltransferase.

This sequence in the N-terminal section; belongs to the carbohydrate kinase PfkB family. It in the C-terminal section; belongs to the cytidylyltransferase family. In terms of assembly, homodimer.

It catalyses the reaction D-glycero-beta-D-manno-heptose 7-phosphate + ATP = D-glycero-beta-D-manno-heptose 1,7-bisphosphate + ADP + H(+). The enzyme catalyses D-glycero-beta-D-manno-heptose 1-phosphate + ATP + H(+) = ADP-D-glycero-beta-D-manno-heptose + diphosphate. The protein operates within nucleotide-sugar biosynthesis; ADP-L-glycero-beta-D-manno-heptose biosynthesis; ADP-L-glycero-beta-D-manno-heptose from D-glycero-beta-D-manno-heptose 7-phosphate: step 1/4. Its pathway is nucleotide-sugar biosynthesis; ADP-L-glycero-beta-D-manno-heptose biosynthesis; ADP-L-glycero-beta-D-manno-heptose from D-glycero-beta-D-manno-heptose 7-phosphate: step 3/4. Functionally, catalyzes the phosphorylation of D-glycero-D-manno-heptose 7-phosphate at the C-1 position to selectively form D-glycero-beta-D-manno-heptose-1,7-bisphosphate. Catalyzes the ADP transfer from ATP to D-glycero-beta-D-manno-heptose 1-phosphate, yielding ADP-D-glycero-beta-D-manno-heptose. This chain is Bifunctional protein HldE, found in Erwinia tasmaniensis (strain DSM 17950 / CFBP 7177 / CIP 109463 / NCPPB 4357 / Et1/99).